The following is a 226-amino-acid chain: Lipoprotein-releasing system ATP-binding protein LolD (226 aa).

The region spanning 5 to 225 (FALSNISKFF…EINSCMLSSV (221 aa)) is the ABC transporter domain. 40-47 (GRSGSGKS) contributes to the ATP binding site.

This sequence belongs to the ABC transporter superfamily. Lipoprotein translocase (TC 3.A.1.125) family. As to quaternary structure, the complex is composed of two ATP-binding proteins (LolD) and two transmembrane proteins (LolC and LolE).

It localises to the cell inner membrane. In terms of biological role, part of the ABC transporter complex LolCDE involved in the translocation of mature outer membrane-directed lipoproteins, from the inner membrane to the periplasmic chaperone, LolA. Responsible for the formation of the LolA-lipoprotein complex in an ATP-dependent manner. This chain is Lipoprotein-releasing system ATP-binding protein LolD, found in Ehrlichia canis (strain Jake).